Consider the following 239-residue polypeptide: Pathogenesis-related protein 5 (239 aa).

Positions 1-23 (MANISSIHILFLVFITSGIAVMA) are cleaved as a signal peptide. 8 cysteine pairs are disulfide-bonded: C32–C238, C79–C89, C94–C99, C146–C228, C151–C211, C159–C174, C178–C187, and C188–C198.

This sequence belongs to the thaumatin family.

The protein resides in the secreted. It is found in the extracellular space. The protein localises to the apoplast. Its function is as follows. Partially responsible for acquired pathogen resistance. This Arabidopsis thaliana (Mouse-ear cress) protein is Pathogenesis-related protein 5.